A 41-amino-acid polypeptide reads, in one-letter code: Ranatuerin-2PLg (41 aa).

The propeptide occupies 1-11 (DDGVEMTEEEV). C36 and C41 are oxidised to a cystine.

Belongs to the frog skin active peptide (FSAP) family. Ranatuerin subfamily.

It is found in the secreted. Its function is as follows. Antimicrobial peptide. This chain is Ranatuerin-2PLg, found in Lithobates palustris (Pickerel frog).